A 423-amino-acid polypeptide reads, in one-letter code: uncharacterized protein (423 aa).

It belongs to the asfivirus E423R family.

The protein resides in the virion. This is an uncharacterized protein from Ornithodoros (relapsing fever ticks).